The chain runs to 242 residues: 1-(5-phosphoribosyl)-5-[(5-phosphoribosylamino)methylideneamino] imidazole-4-carboxamide isomerase (242 aa).

The active-site Proton acceptor is the aspartate 8. The active-site Proton donor is the aspartate 129.

This sequence belongs to the HisA/HisF family.

It localises to the cytoplasm. It catalyses the reaction 1-(5-phospho-beta-D-ribosyl)-5-[(5-phospho-beta-D-ribosylamino)methylideneamino]imidazole-4-carboxamide = 5-[(5-phospho-1-deoxy-D-ribulos-1-ylimino)methylamino]-1-(5-phospho-beta-D-ribosyl)imidazole-4-carboxamide. The protein operates within amino-acid biosynthesis; L-histidine biosynthesis; L-histidine from 5-phospho-alpha-D-ribose 1-diphosphate: step 4/9. The protein is 1-(5-phosphoribosyl)-5-[(5-phosphoribosylamino)methylideneamino] imidazole-4-carboxamide isomerase of Clostridium botulinum (strain Langeland / NCTC 10281 / Type F).